Here is a 426-residue protein sequence, read N- to C-terminus: Gamma-glutamyl phosphate reductase (426 aa).

This sequence belongs to the gamma-glutamyl phosphate reductase family.

Its subcellular location is the cytoplasm. It catalyses the reaction L-glutamate 5-semialdehyde + phosphate + NADP(+) = L-glutamyl 5-phosphate + NADPH + H(+). It participates in amino-acid biosynthesis; L-proline biosynthesis; L-glutamate 5-semialdehyde from L-glutamate: step 2/2. Functionally, catalyzes the NADPH-dependent reduction of L-glutamate 5-phosphate into L-glutamate 5-semialdehyde and phosphate. The product spontaneously undergoes cyclization to form 1-pyrroline-5-carboxylate. The protein is Gamma-glutamyl phosphate reductase of Ralstonia nicotianae (strain ATCC BAA-1114 / GMI1000) (Ralstonia solanacearum).